The following is a 476-amino-acid chain: Bifunctional protein HldE (476 aa).

The tract at residues 1–318 is ribokinase; that stretch reads MKPTLPNYDQ…AEAIHGSQDS (318 aa). 195–198 serves as a coordination point for ATP; that stretch reads NMLE. Residue Asp264 is part of the active site. The segment at 344-476 is cytidylyltransferase; it reads MTNGCFDILH…IIEAIKGGRG (133 aa).

This sequence in the N-terminal section; belongs to the carbohydrate kinase PfkB family. In the C-terminal section; belongs to the cytidylyltransferase family. Homodimer.

It carries out the reaction D-glycero-beta-D-manno-heptose 7-phosphate + ATP = D-glycero-beta-D-manno-heptose 1,7-bisphosphate + ADP + H(+). It catalyses the reaction D-glycero-beta-D-manno-heptose 1-phosphate + ATP + H(+) = ADP-D-glycero-beta-D-manno-heptose + diphosphate. It functions in the pathway nucleotide-sugar biosynthesis; ADP-L-glycero-beta-D-manno-heptose biosynthesis; ADP-L-glycero-beta-D-manno-heptose from D-glycero-beta-D-manno-heptose 7-phosphate: step 1/4. Its pathway is nucleotide-sugar biosynthesis; ADP-L-glycero-beta-D-manno-heptose biosynthesis; ADP-L-glycero-beta-D-manno-heptose from D-glycero-beta-D-manno-heptose 7-phosphate: step 3/4. Functionally, catalyzes the phosphorylation of D-glycero-D-manno-heptose 7-phosphate at the C-1 position to selectively form D-glycero-beta-D-manno-heptose-1,7-bisphosphate. Its function is as follows. Catalyzes the ADP transfer from ATP to D-glycero-beta-D-manno-heptose 1-phosphate, yielding ADP-D-glycero-beta-D-manno-heptose. The protein is Bifunctional protein HldE of Aliivibrio salmonicida (strain LFI1238) (Vibrio salmonicida (strain LFI1238)).